Here is a 298-residue protein sequence, read N- to C-terminus: Cyclin-C (298 aa).

The Cyclin N-terminal domain occupies 46 to 162 (NFITAVATEC…ILDCCLVVHH (117 aa)). Positions 278 to 298 (KLPKPNTPIPPPQQQQSSYHM) are disordered.

This sequence belongs to the cyclin family. Cyclin C subfamily. In terms of assembly, component of the Mediator complex.

It is found in the nucleus. In terms of biological role, component of the Mediator complex, a coactivator involved in regulated gene transcription of nearly all RNA polymerase II-dependent genes. Mediator functions as a bridge to convey information from gene-specific regulatory proteins to the basal RNA polymerase II transcription machinery. Mediator is recruited to promoters by direct interactions with regulatory proteins and serves as a scaffold for the assembly of a functional preinitiation complex with RNA polymerase II and the general transcription factors. Binds to and activates cyclin-dependent kinase cdk-8 that phosphorylates the CTD (C-terminal domain) of the large subunit of RNA polymerase II (RNAp II), which may inhibit the formation of a transcription initiation complex. The protein is Cyclin-C (cic-1) of Caenorhabditis briggsae.